A 275-amino-acid chain; its full sequence is Ribosomal RNA small subunit methyltransferase A (275 aa).

S-adenosyl-L-methionine-binding residues include asparagine 20, leucine 22, glycine 47, glutamate 68, aspartate 90, and asparagine 110.

It belongs to the class I-like SAM-binding methyltransferase superfamily. rRNA adenine N(6)-methyltransferase family. RsmA subfamily.

The protein localises to the cytoplasm. It carries out the reaction adenosine(1518)/adenosine(1519) in 16S rRNA + 4 S-adenosyl-L-methionine = N(6)-dimethyladenosine(1518)/N(6)-dimethyladenosine(1519) in 16S rRNA + 4 S-adenosyl-L-homocysteine + 4 H(+). Functionally, specifically dimethylates two adjacent adenosines (A1518 and A1519) in the loop of a conserved hairpin near the 3'-end of 16S rRNA in the 30S particle. May play a critical role in biogenesis of 30S subunits. This Chlorobaculum tepidum (strain ATCC 49652 / DSM 12025 / NBRC 103806 / TLS) (Chlorobium tepidum) protein is Ribosomal RNA small subunit methyltransferase A.